The chain runs to 212 residues: Large ribosomal subunit protein uL3 (212 aa).

Polar residues predominate over residues 135–155; it reads ATHGNSVSHRAHGSTGQNQSP. The tract at residues 135–162 is disordered; the sequence is ATHGNSVSHRAHGSTGQNQSPGKVFKGK. Gln153 is modified (N5-methylglutamine).

Belongs to the universal ribosomal protein uL3 family. Part of the 50S ribosomal subunit. Forms a cluster with proteins L14 and L19. In terms of processing, methylated by PrmB.

In terms of biological role, one of the primary rRNA binding proteins, it binds directly near the 3'-end of the 23S rRNA, where it nucleates assembly of the 50S subunit. The polypeptide is Large ribosomal subunit protein uL3 (Psychrobacter arcticus (strain DSM 17307 / VKM B-2377 / 273-4)).